The primary structure comprises 141 residues: Hemoglobin subunit alpha (141 aa).

The Globin domain occupies 1–141 (VLSPADKSNV…VSTVLTSKYR (141 aa)). Position 3 is a phosphoserine (S3). An N6-succinyllysine mark is found at K7 and K11. At K16 the chain carries N6-acetyllysine; alternate. K16 carries the N6-succinyllysine; alternate modification. Y24 bears the Phosphotyrosine mark. S35 bears the Phosphoserine mark. K40 carries the post-translational modification N6-succinyllysine. Residue S49 is modified to Phosphoserine. Residue H58 coordinates O2. H87 provides a ligand contact to heme b. S102 is subject to Phosphoserine. Residue T108 is modified to Phosphothreonine. Phosphoserine is present on residues S124 and S131. A phosphothreonine mark is found at T134 and T137. S138 carries the phosphoserine modification.

It belongs to the globin family. Heterotetramer of two alpha chains and two beta chains. As to expression, red blood cells.

Involved in oxygen transport from the lung to the various peripheral tissues. In terms of biological role, hemopressin acts as an antagonist peptide of the cannabinoid receptor CNR1. Hemopressin-binding efficiently blocks cannabinoid receptor CNR1 and subsequent signaling. The sequence is that of Hemoglobin subunit alpha (HBA) from Saguinus mystax (Moustached tamarin).